A 282-amino-acid chain; its full sequence is 2-dehydro-3-deoxyphosphooctonate aldolase (282 aa).

The protein belongs to the KdsA family.

Its subcellular location is the cytoplasm. The catalysed reaction is D-arabinose 5-phosphate + phosphoenolpyruvate + H2O = 3-deoxy-alpha-D-manno-2-octulosonate-8-phosphate + phosphate. Its pathway is carbohydrate biosynthesis; 3-deoxy-D-manno-octulosonate biosynthesis; 3-deoxy-D-manno-octulosonate from D-ribulose 5-phosphate: step 2/3. It participates in bacterial outer membrane biogenesis; lipopolysaccharide biosynthesis. The chain is 2-dehydro-3-deoxyphosphooctonate aldolase from Bartonella bacilliformis (strain ATCC 35685 / KC583 / Herrer 020/F12,63).